Reading from the N-terminus, the 1699-residue chain is MILDTDYITEDGKPVIRVFKKENGEFKIEYDRNFEPYFYALLKDDSAIEEVKKITAKRHGTVVKVKRAEKVKKKFLGRPIEVWKLYFTHPQDVPAIRDKIREHPAVIDIYEYDIPFAKRYLIDKGLIPMEGDEKLKMLAFDIETLYHEGEEFAEGPILMISYADEEGARVITWKKVDLPYVDVVSTEKEMIKRFLRVVKEKDPDVLITYNGDNFDFAYLKRRSEKLGVKFILGRDGSEPKIQRMGDRFAVEVKGRIHFDLYPVIRRTINLPTYTLEAVYEAIFGKPKEKVYAEEIATAWETGEGLERVARYSMEDAKVTFELGKEFFPMEAQLSRLIGQSLWDVSRSSTGNLVEWFLLRKAYERNELAPNKPDERELARRRQSYAGGYVKEPERGLWNNIVYLDFRSLYPSIIITHNVSPDTLNREGCKEYDVAPQVGHKFCKDFPGFIPSLLGDLLEERQKIKRKMRATIDPVEKKLLDYRQRAIKILANSILPDEWLPLLVNGRLKLVRIGDFVDNTMKKGQPLENDGTEVLEVSGIEAISFNRKTKIAEIKPVKALIRHRYRGKVYDIKLSSGRNIKVTEGHSLFAFRDGELVEVTGGEIKPGDFIAVPRRVNLPERHERINLIEILLGLPPEETSDIVLTIPVKGRKNFFKGMLRTLRWIFEEEQRPRTARRYLEHLQKLGYVKLMKRAYEIVNKEALRNYRKLYEVLAERVKYNGNKREYLVHFNDLRNEIKFMPDEELEEWKVGTLNGFRMEPFIEVGEDFAKLLGYYVSEGYARKQRNQKNGWSYSVKIYNNDQRVLDDMEKLASKFFGRVRRGKNYVEISRKMAYVLFESLCGTLAENKRVPEVIFTSPESVRWAFFEGYFIGDGDLHPSKRVRLSTKSEELVNGLVVLLNSLGISAIKIRFDSGVYRVLVNEELPFLGNRKRKNAYYSHVIPKEILEETFGKQFQKNMSPAKLNEKVEKGELDAGKARRIAWLLEGDIVLDRVEKVTVEDYEGYVYDLSVEENENFLAGFGMLYAHNSYYGYYGYAKARWYCRECAESVTAWGRSYIETTIREIEEKFGFKVLYADSVAGNTEVIIRRNGKVEFVPIEKLFQRVDYRIGEKEYCALEGVEALTLDNRGRLVWRKVPYIMRHKTNKKIYRVWFTNSWYLDVTEDHSLIGYLNTSKVKSEKPLKERLVEVKPRELGEKVKSLITLNRAIARSIKANPIAVRLWELIGLLVGDGNWGGHSKWAKYYVGLSCGLDKAEIEEKVLRPLKEAGIISNYYGKSKKGDVSILSKWLAGFMVKYFKDENGNKRIPSFMFNLPREYIEAFLRGLFSADGTVSLRRGIPEIRLTSVNRELSNEVRKLLWLVGVSNSMFTETTPNKYLGNESGTRSIHVRIKNKHRFAKRIGFLLDRKATKLSDNLREHTNKKMAYRYDFDLVYPKKIEEINYDRYVYDIEVEGTHRFFANGILVHNTDGFFATIPGADAETVKKKAMEFLKYINAKLPGLLELEYEGFYVRGFFVTKKKYAVIDEEGKITTRGLEIVRRDWSEIAKETQARVLEAILKHGDVEEAVRIVKEVTEKLSKYEVPPEKLVIHEQITRDLKDYKATGPHVAVAKRLAARGIKIRPGTVISYIVLKGSGRIGDRAIPFDEFDPAKHKYDAEYYIENQVLPAVERILRAFGYRKEDLRYQKTKQVGLGAWLKVKGKK.

DOD-type homing endonuclease domains lie at 770-903 (LLGY…SLGI) and 1222-1361 (LIGL…LVGV).

The protein belongs to the DNA polymerase type-B family. Post-translationally, this protein undergoes a protein self splicing that involves a post-translational excision of the intervening region (intein) followed by peptide ligation.

The enzyme catalyses DNA(n) + a 2'-deoxyribonucleoside 5'-triphosphate = DNA(n+1) + diphosphate. Functionally, in addition to polymerase activity, this DNA polymerase exhibits 3' to 5' exonuclease activity. Its function is as follows. PI-TspGE8I and PI-TspGE8II are endonucleases. The protein is DNA polymerase (pol) of Thermococcus sp. (strain GE8).